Here is a 461-residue protein sequence, read N- to C-terminus: uncharacterized protein (461 aa).

Disordered stretches follow at residues 254–273 (NNNN…NNNN) and 368–414 (QPSQ…NNNS). Positions 381–413 (NNNNNNNNNNNNNNNNNNNNNNNNNNNNNNNNN) are enriched in low complexity.

This is an uncharacterized protein from Dictyostelium discoideum (Social amoeba).